The following is a 750-amino-acid chain: Circadian input-output histidine kinase CikA (750 aa).

Positions 1 to 173 (MLPAFSPIFR…QVIAQIRQSL (173 aa)) are N-terminal domain. Residues 174–333 (DLSEILNNAV…KNFLGQIGEH (160 aa)) form a GAF domain region. Positions 385–609 (NISHELRTPL…IFTTVIPQQN (225 aa)) constitute a Histidine kinase domain. His-388 carries the post-translational modification Phosphohistidine; by autocatalysis. The interval 604–750 (VIPQQNFPPT…VQSIQQEPLR (147 aa)) is psR domain, bind KaiB(fs). A Response regulatory domain is found at 631 to 745 (SVIVIEQDEE…LLLQRVQSIQ (115 aa)). Residue Asp-680 is modified to 4-aspartylphosphate.

This sequence in the N-terminal section; belongs to the phytochrome family. Homodimer. Part of the circadian clock (KaiA, KaiB, KaiC, CikA, RpaA, SasA), the composition of which varies during the circadian cycle. KaiA and CikA compete for binding to KaiB(fs). Interacts with RpaA.

The enzyme catalyses ATP + protein L-histidine = ADP + protein N-phospho-L-histidine.. In terms of biological role, functions in an input pathway to the Kai circadian clock. Senses oxidized quinones via its C-terminal pseudo-receiver domain, providing a link between cell metabolism and the clock. Affects the ratio of phosphorylated to unphosphorylated KaiC, binds quinones via its pseudo-receptor domain. Quinone-binding destabilizes the protein rapidly. Autophosphorylates, does not transfer the phosphate to its pseudo-receiver (PsR) domain. May play a role in cell division. Its function is as follows. Also functions in a two-component CikA/RpaA output pathway from the circadian clock, negatively regulating kaiBC expression independently of labA and of sasA. One of three clock output pathways. Dephosphorylates phospho-RpaA, enhanced by KaiB and KaiC, has only modest kinase activity on RpaA. The protein is Circadian input-output histidine kinase CikA of Synechocystis sp. (strain ATCC 27184 / PCC 6803 / Kazusa).